The chain runs to 745 residues: Pheromone-processing carboxypeptidase KEX1 (745 aa).

Positions 1–47 (MSHFKYRNQTTDICNAAALDAFAMYSNYSVPLALLFALLLSFQTARA) are cleaved as a signal peptide. Topologically, residues 48–655 (LKAADEYAVS…DDDHNSGSHL (608 aa)) are lumenal. Residues serine 214 and aspartate 418 contribute to the active site. Asparagine 471 and asparagine 479 each carry an N-linked (GlcNAc...) asparagine glycan. The active site involves histidine 482. The segment covering 515–526 (ITDDVNKGKDGD) has biased composition (basic and acidic residues). A disordered region spans residues 515-651 (ITDDVNKGKD…AEDEDDDHNS (137 aa)). Acidic residues predominate over residues 527–537 (ASETDDTTELD). A compositionally biased stretch (basic and acidic residues) spans 538 to 549 (CEGKDKLSEECK). N-linked (GlcNAc...) asparagine glycosylation occurs at asparagine 552. Composition is skewed to acidic residues over residues 570–579 (NEEDDNDDTE) and 587–629 (DEKD…DDDK). The span at 630–640 (DGDKPEGKNND) shows a compositional bias: basic and acidic residues. Residues 656-676 (AVTMICLLVSGTIIGGLYFTF) traverse the membrane as a helical segment. The Cytoplasmic segment spans residues 677-745 (RDRFRPRLRA…SRDSFELDNL (69 aa)). The disordered stretch occupies residues 709 to 745 (EQDAADLSNPENGAKKKGPYTSVPTQESRDSFELDNL). Residues 735–745 (ESRDSFELDNL) are compositionally biased toward basic and acidic residues.

Belongs to the peptidase S10 family.

It localises to the golgi apparatus. Its subcellular location is the trans-Golgi network membrane. It carries out the reaction Preferential release of a C-terminal arginine or lysine residue.. In terms of biological role, protease with a carboxypeptidase B-like function involved in the C-terminal processing of the lysine and arginine residues from protein precursors. Promotes cell fusion and is involved in the programmed cell death. The sequence is that of Pheromone-processing carboxypeptidase KEX1 (KEX1) from Lachancea thermotolerans (strain ATCC 56472 / CBS 6340 / NRRL Y-8284) (Yeast).